A 184-amino-acid chain; its full sequence is Large ribosomal subunit protein uL6 (184 aa).

Belongs to the universal ribosomal protein uL6 family. In terms of assembly, part of the 50S ribosomal subunit.

This protein binds to the 23S rRNA, and is important in its secondary structure. It is located near the subunit interface in the base of the L7/L12 stalk, and near the tRNA binding site of the peptidyltransferase center. The polypeptide is Large ribosomal subunit protein uL6 (Pyrococcus abyssi (strain GE5 / Orsay)).